Reading from the N-terminus, the 321-residue chain is Protein-L-histidine N-pros-methyltransferase (321 aa).

A signal peptide spans M1–A24. N89 is a glycosylation site (N-linked (GlcNAc...) asparagine). Positions 177, 213, and 298 each coordinate S-adenosyl-L-homocysteine.

This sequence belongs to the METTL9 family.

It is found in the endoplasmic reticulum. The protein localises to the mitochondrion. The enzyme catalyses L-histidyl-[protein] + S-adenosyl-L-methionine = N(pros)-methyl-L-histidyl-[protein] + S-adenosyl-L-homocysteine + H(+). Its function is as follows. Protein-histidine N-methyltransferase that specifically catalyzes 1-methylhistidine (pros-methylhistidine) methylation of target proteins. Mediates methylation of proteins with a His-x-His (HxH) motif (where 'x' is preferably a small amino acid); 1-methylhistidine modification may affect the binding of zinc and other metals to its target proteins. The polypeptide is Protein-L-histidine N-pros-methyltransferase (Gallus gallus (Chicken)).